The following is a 327-amino-acid chain: Golgi to ER traffic protein 4 homolog (327 aa).

Position 2 is an N-acetylalanine (Ala2). Residue Ser12 is modified to Phosphoserine. An interacts with BAG6 region spans residues 195–271 (FVAQAVLQFL…YQPSLRRDPM (77 aa)). Residues 307–327 (GSSEQEDGEESPSDGSPIELD) form a disordered region.

It belongs to the GET4 family. In terms of assembly, component of the BAG6/BAT3 complex, at least composed of BAG6, UBL4A and GET4/TRC35. Interacts with BAG6; the interaction is direct and localizes BAG6 to the cytosol. Interacts with GET3. Ubiquitinated by RNF12, leading to proteasomal degradation. When unassembled from BAG6; ubiquitinylation is modulated by BAG6 quality control role and effectuated by RNF126.

The protein resides in the cytoplasm. Its subcellular location is the cytosol. As part of a cytosolic protein quality control complex, the BAG6/BAT3 complex, maintains misfolded and hydrophobic patches-containing proteins in a soluble state and participates in their proper delivery to the endoplasmic reticulum or alternatively can promote their sorting to the proteasome where they undergo degradation. The BAG6/BAT3 complex is involved in the post-translational delivery of tail-anchored/type II transmembrane proteins to the endoplasmic reticulum membrane. Recruited to ribosomes, it interacts with the transmembrane region of newly synthesized tail-anchored proteins and together with SGTA and ASNA1 mediates their delivery to the endoplasmic reticulum. Client proteins that cannot be properly delivered to the endoplasmic reticulum are ubiquitinated and sorted to the proteasome. Similarly, the BAG6/BAT3 complex also functions as a sorting platform for proteins of the secretory pathway that are mislocalized to the cytosol either delivering them to the proteasome for degradation or to the endoplasmic reticulum. The BAG6/BAT3 complex also plays a role in the endoplasmic reticulum-associated degradation (ERAD), a quality control mechanism that eliminates unwanted proteins of the endoplasmic reticulum through their retrotranslocation to the cytosol and their targeting to the proteasome. It maintains these retrotranslocated proteins in an unfolded yet soluble state condition in the cytosol to ensure their proper delivery to the proteasome. This Homo sapiens (Human) protein is Golgi to ER traffic protein 4 homolog.